A 227-amino-acid polypeptide reads, in one-letter code: Cytochrome c oxidase subunit 2 (227 aa).

Residues 1 to 14 (MAYPFQLGLQDATS) lie on the Mitochondrial intermembrane side of the membrane. The helical transmembrane segment at 15-45 (PIMEELTNFHDHTLMIVFLISTLVLYIISLM) threads the bilayer. The Mitochondrial matrix segment spans residues 46 to 59 (LTTKLTHTSTMDAQ). Residues 60–87 (EVETIWTILPAVILILIALPSLRILYMM) form a helical membrane-spanning segment. Topologically, residues 88–227 (DEINNPVLTV…YFENWSASMI (140 aa)) are mitochondrial intermembrane. Histidine 161, cysteine 196, glutamate 198, cysteine 200, histidine 204, and methionine 207 together coordinate Cu cation. Position 198 (glutamate 198) interacts with Mg(2+). Phosphotyrosine is present on tyrosine 218.

The protein belongs to the cytochrome c oxidase subunit 2 family. As to quaternary structure, component of the cytochrome c oxidase (complex IV, CIV), a multisubunit enzyme composed of 14 subunits. The complex is composed of a catalytic core of 3 subunits MT-CO1, MT-CO2 and MT-CO3, encoded in the mitochondrial DNA, and 11 supernumerary subunits COX4I, COX5A, COX5B, COX6A, COX6B, COX6C, COX7A, COX7B, COX7C, COX8 and NDUFA4, which are encoded in the nuclear genome. The complex exists as a monomer or a dimer and forms supercomplexes (SCs) in the inner mitochondrial membrane with NADH-ubiquinone oxidoreductase (complex I, CI) and ubiquinol-cytochrome c oxidoreductase (cytochrome b-c1 complex, complex III, CIII), resulting in different assemblies (supercomplex SCI(1)III(2)IV(1) and megacomplex MCI(2)III(2)IV(2)). Found in a complex with TMEM177, COA6, COX18, COX20, SCO1 and SCO2. Interacts with TMEM177 in a COX20-dependent manner. Interacts with COX20. Interacts with COX16. The cofactor is Cu cation.

The protein localises to the mitochondrion inner membrane. The catalysed reaction is 4 Fe(II)-[cytochrome c] + O2 + 8 H(+)(in) = 4 Fe(III)-[cytochrome c] + 2 H2O + 4 H(+)(out). Functionally, component of the cytochrome c oxidase, the last enzyme in the mitochondrial electron transport chain which drives oxidative phosphorylation. The respiratory chain contains 3 multisubunit complexes succinate dehydrogenase (complex II, CII), ubiquinol-cytochrome c oxidoreductase (cytochrome b-c1 complex, complex III, CIII) and cytochrome c oxidase (complex IV, CIV), that cooperate to transfer electrons derived from NADH and succinate to molecular oxygen, creating an electrochemical gradient over the inner membrane that drives transmembrane transport and the ATP synthase. Cytochrome c oxidase is the component of the respiratory chain that catalyzes the reduction of oxygen to water. Electrons originating from reduced cytochrome c in the intermembrane space (IMS) are transferred via the dinuclear copper A center (CU(A)) of subunit 2 and heme A of subunit 1 to the active site in subunit 1, a binuclear center (BNC) formed by heme A3 and copper B (CU(B)). The BNC reduces molecular oxygen to 2 water molecules using 4 electrons from cytochrome c in the IMS and 4 protons from the mitochondrial matrix. This is Cytochrome c oxidase subunit 2 (MT-CO2) from Leopoldamys sabanus (Long-tailed giant rat).